Reading from the N-terminus, the 109-residue chain is Large ribosomal subunit protein uL22 (109 aa).

This sequence belongs to the universal ribosomal protein uL22 family. In terms of assembly, part of the 50S ribosomal subunit.

In terms of biological role, this protein binds specifically to 23S rRNA; its binding is stimulated by other ribosomal proteins, e.g. L4, L17, and L20. It is important during the early stages of 50S assembly. It makes multiple contacts with different domains of the 23S rRNA in the assembled 50S subunit and ribosome. Functionally, the globular domain of the protein is located near the polypeptide exit tunnel on the outside of the subunit, while an extended beta-hairpin is found that lines the wall of the exit tunnel in the center of the 70S ribosome. The chain is Large ribosomal subunit protein uL22 from Laribacter hongkongensis (strain HLHK9).